We begin with the raw amino-acid sequence, 276 residues long: Mitochondrial outer membrane protein porin of 36 kDa (276 aa).

The protein belongs to the eukaryotic mitochondrial porin (TC 1.B.8.1) family.

The protein localises to the mitochondrion outer membrane. Its function is as follows. Forms a channel through the cell membrane that allows diffusion of small hydrophilic molecules. The channel adopts an open conformation at low or zero membrane potential and a closed conformation at potentials above 30-40 mV. The open state has a weak anion selectivity whereas the closed state is cation-selective. The polypeptide is Mitochondrial outer membrane protein porin of 36 kDa (Solanum tuberosum (Potato)).